The following is a 436-amino-acid chain: uncharacterized protein (436 aa).

This is an uncharacterized protein from Haemophilus influenzae (strain ATCC 51907 / DSM 11121 / KW20 / Rd).